The following is a 93-amino-acid chain: Acyl carrier protein AcpXL (93 aa).

Residues 2 to 88 (STTFDKVAKI…NLCAKIDALV (87 aa)) enclose the Carrier domain. Ser37 carries the O-(pantetheine 4'-phosphoryl)serine modification.

Post-translationally, 4'-phosphopantetheine is transferred from CoA to a specific serine of apo-ACP by AcpS. This modification is essential for activity because fatty acids are bound in thioester linkage to the sulfhydryl of the prosthetic group.

The protein localises to the cytoplasm. Its pathway is glycolipid biosynthesis; KDO(2)-lipid A biosynthesis. Carrier of the growing fatty acid chain in fatty acid biosynthesis. Is involved in the transfer of long hydroxylated fatty acids to lipid A. This is Acyl carrier protein AcpXL (acpXL) from Mesorhizobium japonicum (strain LMG 29417 / CECT 9101 / MAFF 303099) (Mesorhizobium loti (strain MAFF 303099)).